A 240-amino-acid polypeptide reads, in one-letter code: uncharacterized protein (240 aa).

Residues 1–85 (MSGFIKSTLL…LCGCCCWTNT (85 aa)) lie on the Cytoplasmic side of the membrane. The chain crosses the membrane as a helical span at residues 86–106 (IGWAPLLALLPVIGPLLMYWV). At 107 to 131 (HDKLIELADDRYKLPAEIKVKMHGN) the chain is on the extracellular side. Residues 132–152 (IVIDLLISLVPILGSVFAWLH) form a helical membrane-spanning segment. Over 153 to 240 (ACSTRNAAIV…TNGRPQRGYR (88 aa)) the chain is Cytoplasmic. The disordered stretch occupies residues 181–240 (QKEENEKHSNANTAPPVVGGNKNVNGNRNNSKMYNRPPVTAPPAPAYTRSTNGRPQRGYR). The segment covering 197–210 (VVGGNKNVNGNRNN) has biased composition (low complexity).

It is found in the membrane. This is an uncharacterized protein from Saccharomyces cerevisiae (strain ATCC 204508 / S288c) (Baker's yeast).